The primary structure comprises 356 residues: Testis-expressed protein 19.1 (356 aa).

The tract at residues 1–78 (MCPPVSVRHG…WDAEPMEHLS (78 aa)) is interaction with LIRE1. Over residues 59 to 72 (LSEEEEEEEVWDAE) the composition is skewed to acidic residues. Residues 59–107 (LSEEEEEEEVWDAEPMEHLSESESLESDSKQDAGSEQDAGSEPNTRSEQ) form a disordered region. Residues 73–91 (PMEHLSESESLESDSKQDA) are compositionally biased toward basic and acidic residues. The segment at 139–186 (QWVVFSISVPTELLPQEAVPLDLGPEDVEWTQALPWRLDVLFPCSHRL) is important for interaction with piRNA.

In terms of assembly, interacts with UBR2; does not lead to Tex19.1 degradation and stabilizes it. Interacts with piRNA-associated proteins DDX4, EDC4, MAEL, PIWIL1, PIWIL2, RANBP9 and TDRD6. Interacts with L1RE1.

The protein localises to the cytoplasm. Required during spermatogenesis and placenta development, participating in the repression of retrotransposable elements and prevent their mobilization. Collaborates with the Piwi-interacting RNA (piRNA) pathway, which mediates the repression of transposable elements during meiosis by forming complexes composed of piRNAs and Piwi proteins. Interacts with Piwi proteins and directly binds piRNAs, a class of 24 to 30 nucleotide RNAs that are generated by a Dicer-independent mechanism and are primarily derived from transposons and other repeated sequence elements. Also during spermatogenesis, promotes, with UBR2, SPO11-dependent recombination foci to accumulate and drive robust homologous chromosome synapsis. Interacts with LINE-1 retrotransposon encoded LIRE1, stimulates LIRE1 polyubiquitination, mediated by UBR2, and degradation, inhibiting LINE-1 retrotransposon mobilization. This chain is Testis-expressed protein 19.1 (Tex19.1), found in Rattus norvegicus (Rat).